The chain runs to 268 residues: M1-specific T cell receptor alpha chain (268 aa).

Residues 1-19 (MVLKFSVSILWIQLAWVST) form the signal peptide. The Ig-like V-type domain maps to 20–107 (QLLEQSPQFL…QPGDTGLYLC (88 aa)). A t cell receptor alpha variable 27 region spans residues 20 to 109 (QLLEQSPQFL…GDTGLYLCAG (90 aa)). N-linked (GlcNAc...) asparagine glycans are attached at residues asparagine 36 and asparagine 42. Cysteine 41 and cysteine 107 are disulfide-bonded. A CDR1 region spans residues 45-49 (SVFSS). The segment at 67 to 69 (VVT) is CDR2. The interval 107–118 (CAGGGSQGNLIF) is CDR3. Residues 110 to 128 (GGSQGNLIFGKGTKLSVKP) form a t cell receptor alpha joining 42 region. The interval 129-268 (IQNPDPAVYQ…LLMTLRLWSS (140 aa)) is t cell receptor alpha constant. An Ig-like C1-type domain is found at 147–235 (KSVCLFTDFD…LVEKSFETDT (89 aa)). Residues cysteine 150 and cysteine 200 are joined by a disulfide bond. N-linked (GlcNAc...) asparagine glycans are attached at residues asparagine 160, asparagine 194, asparagine 205, and asparagine 241. Positions 222 to 243 (CDVKLVEKSFETDTNLNFQNLS) are connecting peptide. A helical membrane pass occupies residues 244-266 (VIGFRILLLKVAGFNLLMTLRLW). Residues 267 to 268 (SS) lie on the Cytoplasmic side of the membrane.

In terms of assembly, disulfide-linked heterodimer with TRBV19*01J2S7*01C*02 beta chain. The TR primarily interacts via its CDR3-beta domain with M/matrix protein 1-derived peptide (GILGFVFTL) displayed by HLA-A*02.01 in a 'peg-notch' recognition mode. The alpha-beta TR associates with the transmembrane signaling CD3 coreceptor proteins to form the TR-CD3 (TCR). The assembly of alpha-beta TR heterodimers with CD3 occurs in the endoplasmic reticulum where a single alpha-beta TR heterodimer associates with one CD3D-CD3E heterodimer, one CD3G-CD3E heterodimer and one CD247 homodimer forming a stable octameric structure. CD3D-CD3E and CD3G-CD3E heterodimers preferentially associate with TR alpha and TR beta chains (via TM domain), respectively. The association of the CD247 homodimer is the last step of TCR assembly in the endoplasmic reticulum and is required for transport to the cell surface. Expressed in M/matrix protein 1-specific effector and memory CD8-positive T cells readily detectable in the peripheral blood, secondary lymphoid organs and lung (primary site of infection) of IAV infected individuals.

The protein localises to the cell membrane. The alpha chain of TRAV27*01J42*01C*01/TRBV19*01J2S7*01C*02 alpha-beta T cell receptor (TR) clonotype that is specific for HLA-A*02:01-restricted M/matrix protein 1 immunodominant epitope GILGFVFTL of influenza A virus (IAV). Classified as a public TR clonotype, it is preferentially selected in effector memory CD8-positive T cells among multiple HLA-A*02:01 carriers and confers long-lived immunity against IAV infection. Can cross-recognize sporadically emerging IAV variants by molecular mimicry, inducing immunity toward different influenza strains. Antigen recognition initiates TR-CD3 clustering on the cell surface and intracellular activation of LCK that phosphorylates the ITAM motifs of CD3G, CD3D, CD3E and CD247 enabling the recruitment of ZAP70. In turn, ZAP70 phosphorylates LAT, which recruits numerous signaling molecules to form the LAT signalosome. The LAT signalosome propagates signal branching to three major signaling pathways, the calcium, the mitogen-activated protein kinase (MAPK) kinase and the nuclear factor NF-kappa-B (NF-kB) pathways, leading to the mobilization of transcription factors that are critical for gene expression and essential for T cell differentiation into effector/memory T cells. This Homo sapiens (Human) protein is M1-specific T cell receptor alpha chain.